Consider the following 111-residue polypeptide: MIGQRIKQYRKEKGYSLSELAEKAGVAKSYLSSIERNLQTNPSIQFLEKVSAVLDVSVHTLLNEKDETEYDGQLDSEWENLVRDAMASGVSKKQFREFLDYQKWKKRQEKE.

The HTH cro/C1-type domain occupies 6-61 (IKQYRKEKGYSLSELAEKAGVAKSYLSSIERNLQTNPSIQFLEKVSAVLDVSVHTL). Positions 17-36 (LSELAEKAGVAKSYLSSIER) form a DNA-binding region, H-T-H motif. The 39-residue stretch at 65 to 103 (KDETEYDGQLDSEWENLVRDAMASGVSKKQFREFLDYQK) folds into the Sin domain.

Homotetramer. Also associates with SinI.

Affects autolysin level and flagellation. This chain is HTH-type transcriptional regulator SinR (sinR), found in Bacillus licheniformis.